The following is a 695-amino-acid chain: DNA ligase (695 aa).

NAD(+) contacts are provided by residues 39–43 (DAEYD), 88–89 (SL), and Glu-124. Lys-126 functions as the N6-AMP-lysine intermediate in the catalytic mechanism. The NAD(+) site is built by Arg-147, Glu-183, Lys-299, and Lys-323. Residues Cys-419, Cys-422, Cys-437, and Cys-443 each contribute to the Zn(2+) site. The BRCT domain maps to 612–695 (PAQGHLSGKT…ELAGIGPVGP (84 aa)).

The protein belongs to the NAD-dependent DNA ligase family. LigA subfamily. It depends on Mg(2+) as a cofactor. Requires Mn(2+) as cofactor.

It carries out the reaction NAD(+) + (deoxyribonucleotide)n-3'-hydroxyl + 5'-phospho-(deoxyribonucleotide)m = (deoxyribonucleotide)n+m + AMP + beta-nicotinamide D-nucleotide.. Its function is as follows. DNA ligase that catalyzes the formation of phosphodiester linkages between 5'-phosphoryl and 3'-hydroxyl groups in double-stranded DNA using NAD as a coenzyme and as the energy source for the reaction. It is essential for DNA replication and repair of damaged DNA. In Gluconacetobacter diazotrophicus (strain ATCC 49037 / DSM 5601 / CCUG 37298 / CIP 103539 / LMG 7603 / PAl5), this protein is DNA ligase.